Reading from the N-terminus, the 372-residue chain is Erythronate-4-phosphate dehydrogenase (372 aa).

Residues Ser-45 and Thr-66 each contribute to the substrate site. Position 146 (Asp-146) interacts with NAD(+). Arg-209 is a catalytic residue. Asp-233 is an NAD(+) binding site. Glu-238 is an active-site residue. The active-site Proton donor is the His-255. An NAD(+)-binding site is contributed by Gly-258. Position 259 (Tyr-259) interacts with substrate.

The protein belongs to the D-isomer specific 2-hydroxyacid dehydrogenase family. PdxB subfamily. In terms of assembly, homodimer.

The protein resides in the cytoplasm. The enzyme catalyses 4-phospho-D-erythronate + NAD(+) = (R)-3-hydroxy-2-oxo-4-phosphooxybutanoate + NADH + H(+). The protein operates within cofactor biosynthesis; pyridoxine 5'-phosphate biosynthesis; pyridoxine 5'-phosphate from D-erythrose 4-phosphate: step 2/5. In terms of biological role, catalyzes the oxidation of erythronate-4-phosphate to 3-hydroxy-2-oxo-4-phosphonooxybutanoate. This Blochmanniella floridana protein is Erythronate-4-phosphate dehydrogenase.